The sequence spans 406 residues: Olfactomedin-like protein 3 (406 aa).

A signal peptide spans 1 to 21 (MGPHTQLLILLLLSWLGPLQG). Residues 22-101 (QQHHLVEYME…REVDYLETQN (80 aa)) are a coiled coil. Residues 134-401 (DCGYTISQVR…QIVYKLEMRK (268 aa)) form the Olfactomedin-like domain. An intrachain disulfide couples Cys135 to Cys328. Residue Asn248 is glycosylated (N-linked (GlcNAc...) asparagine).

The protein belongs to the OLFML3 family.

It is found in the secreted. Its function is as follows. Secreted scaffold protein that plays an essential role in dorsoventral patterning during early development. Stabilizes axial formation by restricting chordin (CHRD) activity on the dorsal side. Acts by facilitating the association between the tolloid proteases and their substrate chordin (CHRD), leading to enhance chordin (CHRD) degradation. May have matrix-related function involved in placental and embryonic development, or play a similar role in other physiological processes. The polypeptide is Olfactomedin-like protein 3 (OLFML3) (Bos taurus (Bovine)).